The primary structure comprises 58 residues: MAVPKKRTSKAKKNARKSVWKKKADKAAKKSLSLAKSVLQGKTTSFVYSLYIDELFSI.

Positions 1–23 (MAVPKKRTSKAKKNARKSVWKKK) are disordered.

This sequence belongs to the bacterial ribosomal protein bL32 family.

Its subcellular location is the plastid. It localises to the chloroplast. The protein is Large ribosomal subunit protein bL32c (rpl32-A) of Trieres chinensis (Marine centric diatom).